The sequence spans 91 residues: Putative defensin-like protein 221 (91 aa).

Residues 1-19 (MKTLFFFLTIAVLVSSCTS) form the signal peptide. 3 cysteine pairs are disulfide-bonded: C61–C78, C64–C83, and C68–C85.

This sequence belongs to the DEFL family.

It localises to the secreted. This chain is Putative defensin-like protein 221, found in Arabidopsis thaliana (Mouse-ear cress).